We begin with the raw amino-acid sequence, 544 residues long: Protein kinase dsk1 (544 aa).

The Protein kinase domain occupies 81–516 (YVVERKLGWG…AGYMSNSPWL (436 aa)). Residues 87 to 95 (LGWGHFSTV) and Lys110 each bind ATP. The Proton acceptor role is filled by Asp214. Disordered stretches follow at residues 235 to 299 (PATT…SSPF) and 316 to 341 (ISLR…SLIL). Residues 237-254 (TTSSPTSNTSSSKTRNNT) show a composition bias toward low complexity. Composition is skewed to polar residues over residues 281–299 (KNPT…SSPF) and 327–337 (HPNSPFSSGDN).

This sequence belongs to the protein kinase superfamily. Ser/Thr protein kinase family. In terms of processing, phosphorylated on Ser residue(s).

The protein resides in the cytoplasm. It localises to the nucleus. The catalysed reaction is L-seryl-[protein] + ATP = O-phospho-L-seryl-[protein] + ADP + H(+). It carries out the reaction L-threonyl-[protein] + ATP = O-phospho-L-threonyl-[protein] + ADP + H(+). Its function is as follows. May play an important role in mitotic control by altering cellular location, degree of phosphorylation and kinase activity. Abundant expression accelerates the exit when cells are in M-phase and also delays the entry into mitosis when cells are in G2. Phosphorylates prp2 in vitro and so may have a role in co-ordinating pre-mRNA splicing with the progression of the cell division cycle. The chain is Protein kinase dsk1 (dsk1) from Schizosaccharomyces pombe (strain 972 / ATCC 24843) (Fission yeast).